The primary structure comprises 141 residues: Nucleoside diphosphate kinase (141 aa).

ATP contacts are provided by lysine 11, phenylalanine 59, arginine 87, threonine 93, arginine 104, and asparagine 114. The Pros-phosphohistidine intermediate role is filled by histidine 117.

The protein belongs to the NDK family. Homotetramer. Mg(2+) serves as cofactor.

Its subcellular location is the cytoplasm. The catalysed reaction is a 2'-deoxyribonucleoside 5'-diphosphate + ATP = a 2'-deoxyribonucleoside 5'-triphosphate + ADP. It carries out the reaction a ribonucleoside 5'-diphosphate + ATP = a ribonucleoside 5'-triphosphate + ADP. Major role in the synthesis of nucleoside triphosphates other than ATP. The ATP gamma phosphate is transferred to the NDP beta phosphate via a ping-pong mechanism, using a phosphorylated active-site intermediate. This Pseudomonas syringae pv. tomato (strain ATCC BAA-871 / DC3000) protein is Nucleoside diphosphate kinase.